We begin with the raw amino-acid sequence, 144 residues long: Major allergen Blo t 12 (144 aa).

The signal sequence occupies residues 1–20 (MKSVLIFLVAIALFSANIVS). The disordered stretch occupies residues 24-77 (QTTRGRHTEPDDHHEKPTTQCTHEETTSTQHHHEEVVTTQTPHHEEKTTTEETH). The 53-residue stretch at 92-144 (HVVCHEEGPIHIQEMCNKYIICSKSGSLWYITVMPCSIGTKFDPISRNCVLDN) folds into the Chitin-binding type-2 domain. Cys127 and Cys140 are disulfide-bonded.

This Blomia tropicalis (Mite) protein is Major allergen Blo t 12.